The chain runs to 547 residues: MALNKSMHPRNRYKDKPPDFAYLASKYPEFKQHVNVNLAGRVSLNFKDPCAVRALTCTLLKEDFGLTIDIPLERLIPTVPLRLNYIHWVEDLINYHDSDKTALRRGIDIGTGASCIYPLLGATLNGWYFLATEVDDICYNYAKKNVEQNNLSDLIKVVKVPQKTLLMDALKEESEIIYDFCMCNPPFFANQLEAQGVNSRNPHRSPPSSVNTGGITEIMAEGGELEFVKRIIHDSLKLKKRLRWYSCMLGKKCSLAPLKEELRLQGVPKVAHTEFYQGRTMRWALAWSFYEEVIIPNPPKKRKLEKPRKPMVFTVLESVIKLLTEKLPSGSEVPESITLVADCIKKILTDLKVQHKIVPCGRDEESLFLTAVENSWIHIRRKKRDRTRQLRELPRAPNDFLQSNKPDALHKETSDQGQNSGDPPATKESESVTQSETCVPHTSSTPESAAPALSEPMEAENSDSKPDEVCNNDEEQDLGEDMKQSCGEASSAPQGSGSPFLFKCVLNVKKENSDVLVEMHCVEGQNRDLMNQLCTYIRNQIYRLATS.

Residues Pro-17 to Phe-20 are RNA-binding. The S-adenosyl-L-methionine site is built by Arg-82, Gly-110, Ser-114, Glu-133, Thr-164, and Asn-184. A K-loop region spans residues Lys-163–Met-167. RNA-binding regions lie at residues Ser-199–Asn-211, Gly-250–Ser-254, and Gln-277–Trp-283. A VCR 1 region spans residues Phe-289–Asn-398. A disordered region spans residues Lys-383–Asp-473. The span at Ser-431 to Glu-447 shows a compositional bias: polar residues. Residues Phe-500–Ser-547 are VCR 2.

This sequence belongs to the methyltransferase superfamily. METTL16/RlmF family.

It localises to the nucleus. Its subcellular location is the cytoplasm. It carries out the reaction adenosine in U6 snRNA + S-adenosyl-L-methionine = N(6)-methyladenosine in U6 snRNA + S-adenosyl-L-homocysteine + H(+). The enzyme catalyses an adenosine in mRNA + S-adenosyl-L-methionine = an N(6)-methyladenosine in mRNA + S-adenosyl-L-homocysteine + H(+). With respect to regulation, methyltransferase activity is autoinhibited by the K-loop region that blocks S-adenosyl-L-methionine-binding. Upon activation, K-loop changes conformation, allowing S-adenosyl-L-methionine-binding and subsequent methyltransferase activity. mRNA N6-adenosine-methyltransferase activity is inhibited by zinc. Its function is as follows. RNA N6-methyltransferase that methylates adenosine residues at the N(6) position of a subset of RNAs and is involved in S-adenosyl-L-methionine homeostasis by regulating expression of MAT2A transcripts. Able to N6-methylate a subset of mRNAs and U6 small nuclear RNAs (U6 snRNAs). In contrast to the METTL3-METTL14 heterodimer, only able to methylate a limited number of RNAs: requires both a 5'UACAGAGAA-3' nonamer sequence and a specific RNA structure. Plays a key role in S-adenosyl-L-methionine homeostasis by mediating N6-methylation of MAT2A mRNAs, altering splicing of MAT2A transcripts: in presence of S-adenosyl-L-methionine, binds the 3'-UTR region of MAT2A mRNA and specifically N6-methylates the first hairpin of MAT2A mRNA, impairing MAT2A splicing and protein expression. In S-adenosyl-L-methionine-limiting conditions, binds the 3'-UTR region of MAT2A mRNA but stalls due to the lack of a methyl donor, preventing N6-methylation and promoting expression of MAT2A. In addition to mRNAs, also able to mediate N6-methylation of U6 small nuclear RNA (U6 snRNA): specifically N6-methylates adenine in position 43 of U6 snRNAs. The protein is RNA N(6)-adenosine-methyltransferase mettl16 (mettl16) of Xenopus laevis (African clawed frog).